A 257-amino-acid polypeptide reads, in one-letter code: Anamorsin homolog (257 aa).

The segment at 1–132 (MSVLALDVAR…ARGTAFALKS (132 aa)) is N-terminal SAM-like domain. The interval 133-171 (RAVRVNATAADAADAWGASAAADDDELIDESALLTELDV) is linker. [2Fe-2S] cluster-binding residues include C181, C190, C193, and C195. Positions 181–195 (CDVGAGKKACKNCTC) are fe-S binding site A. Positions 219, 222, 230, and 233 each coordinate [4Fe-4S] cluster. 2 consecutive short sequence motifs (cx2C motif) follow at residues 219–222 (CGNC) and 230–233 (CAGC). The fe-S binding site B stretch occupies residues 219 to 233 (CGNCALGDAFRCAGC).

This sequence belongs to the anamorsin family. As to quaternary structure, monomer. The cofactor is [2Fe-2S] cluster. It depends on [4Fe-4S] cluster as a cofactor.

The protein localises to the cytoplasm. Its subcellular location is the mitochondrion intermembrane space. In terms of biological role, component of the cytosolic iron-sulfur (Fe-S) protein assembly (CIA) machinery. Required for the maturation of extramitochondrial Fe-S proteins. Part of an electron transfer chain functioning in an early step of cytosolic Fe-S biogenesis, facilitating the de novo assembly of a [4Fe-4S] cluster on the cytosolic Fe-S scaffold complex. Electrons are transferred from NADPH via a FAD- and FMN-containing diflavin oxidoreductase. Together with the diflavin oxidoreductase, also required for the assembly of the diferric tyrosyl radical cofactor of ribonucleotide reductase (RNR), probably by providing electrons for reduction during radical cofactor maturation in the catalytic small subunit. The protein is Anamorsin homolog of Ostreococcus lucimarinus (strain CCE9901).